We begin with the raw amino-acid sequence, 398 residues long: Phosphoglycerate kinase (398 aa).

Residues 22-24 (DFN), Arg38, 61-64 (HLGR), Arg120, and Arg153 contribute to the substrate site. ATP contacts are provided by residues Lys204, Glu326, and 352–355 (GGDT).

It belongs to the phosphoglycerate kinase family. In terms of assembly, monomer.

It localises to the cytoplasm. It carries out the reaction (2R)-3-phosphoglycerate + ATP = (2R)-3-phospho-glyceroyl phosphate + ADP. It participates in carbohydrate degradation; glycolysis; pyruvate from D-glyceraldehyde 3-phosphate: step 2/5. In Geobacter metallireducens (strain ATCC 53774 / DSM 7210 / GS-15), this protein is Phosphoglycerate kinase.